Here is a 521-residue protein sequence, read N- to C-terminus: Protein DML1 (521 aa).

This sequence belongs to the misato family.

It is found in the mitochondrion. Its function is as follows. Involved in the partitioning of the mitochondrial organelle and mitochondrial DNA (mtDNA) inheritance. This Phaeosphaeria nodorum (strain SN15 / ATCC MYA-4574 / FGSC 10173) (Glume blotch fungus) protein is Protein DML1 (DML1).